We begin with the raw amino-acid sequence, 612 residues long: Rhotekin-2 (612 aa).

The 77-residue stretch at 3–79 (IKRKKIRESA…LRSQMGESNT (77 aa)) folds into the REM-1 domain. One can recognise a PH domain in the interval 285–392 (DEAMMGFLNQ…WMEAFWQHFY (108 aa)). Disordered stretches follow at residues 483–530 (RNKP…SDKE) and 574–612 (ENKAELDTGTQEPIKPVPTPRQKSLREKLDPRVWLQSQV). Residues 486-498 (PPLLSSDDPSTSS) are compositionally biased toward low complexity.

In Xenopus laevis (African clawed frog), this protein is Rhotekin-2 (rtkn2).